Here is a 548-residue protein sequence, read N- to C-terminus: MSVPNKTTVLVIGGGPAGSYAAAVLARENVDTVLLEAEKFPRYHIGESMLASMRFFLRFIDLEEQFDAYGFQKKYGATFKINSKREAYTDFSASLGPGGYAWNVIRSEADDLIFRYAGEQGAHIFDGTKVDDIEFLSYDGADGANFTPAAFLVNPGRPVAATWSRKDGTRGRIKFDYLIDASGRAGIISTKYLKNRTVNEGLRNIANWSYWKGAKVYGEGSDQQGSPFFEALTDGSGWCWAIPLHNGTLSVGVVMRQDLFFGKKKAAGSPGSLEMYKLCLQSVPGISGLLEDAEIVSDVKMASDWSYSASAYAGPHFRVAGDAGCFIDPYFSSGVHLALVGGLSAATTIQAVRRGETSEFSAAKWHSSKVTEGYTRFLLVVMAVLRQLRKQNAAVITDDKEEGFDTAFGLIQPVIQGQADTGESEQQRMVAGVQFSLERFGQATPEAQRALLDKVQFAGQNAEELEKLTADELAVLHNIIGRQLKMTKVEKNLDNFTRDVIDGWAPRVERGKLGLQRADTSIMTAEMKDLFQLNRSLDSTKAGIQLPA.

FAD is bound by residues glycine 14, alanine 17, and glutamate 47. Residues serine 333 and glycine 334 each coordinate chloride. Residue valine 335 coordinates FAD.

This sequence belongs to the flavin-dependent halogenase family.

It catalyses the reaction sulochrin + 2 FADH2 + 2 chloride + 2 O2 = dihydrogeodin + 2 FAD + 4 H2O + H(+). It participates in secondary metabolite biosynthesis. Sulochrin halogenase; part of the gene cluster that mediates the biosynthesis of geodin, an intermediate in the biosynthesis of other natural products. The pathway begins with the synthesis of atrochrysone thioester by the polyketide synthase (PKS) gedC. The atrochrysone carboxyl ACP thioesterase gedB then breaks the thioester bond and releases the atrochrysone carboxylic acid from gedC. The atrochrysone carboxylic acid is then converted to atrochrysone which is further transformed into emodinanthrone. The next step is performed by the emodinanthrone oxygenase gedH that catalyzes the oxidation of emodinanthrone to emodin. Emodin O-methyltransferase encoded probably by gedA then catalyzes methylation of the 8-hydroxy group of emodin to form questin. Ring cleavage of questin by questin oxidase gedK leads to desmethylsulochrin via several intermediates including questin epoxide. Another methylation step probably catalyzed by methyltransferase gedG leads to the formation of sulochrin which is further converted to dihydrogeodin by the sulochrin halogenase gedL. Finally, the dihydrogeodin oxidase gedJ catalyzes the stereospecific phenol oxidative coupling reaction converting dihydrogeodin to geodin. The sequence is that of Sulochrin halogenase gedL from Aspergillus terreus (strain NIH 2624 / FGSC A1156).